The primary structure comprises 908 residues: Oxysterol-binding protein 2 (908 aa).

The tract at residues 42-112 is disordered; sequence SAFGSGPASK…GLWPGSENGT (71 aa). The span at 81 to 90 shows a compositional bias: polar residues; sequence EPGSQTTSVP. The 93-residue stretch at 179–271 folds into the PH domain; that stretch reads LDSYKGWLLK…WITALELAKA (93 aa). Disordered stretches follow at residues 279–299, 413–445, and 822–843; these read TQSD…DNSE, RAFC…SEED, and LMER…EKQR. S284 bears the Phosphoserine mark. Positions 424–437 are enriched in low complexity; it reads SSSKSFSEGSFLTS.

Belongs to the OSBP family. In terms of assembly, interacts with CCDC159. As to expression, expressed in the testis (at protein level). Expressed in postmeiotic germ cells of the testis.

It is found in the membrane. Its subcellular location is the cytoplasmic vesicle. The protein resides in the secretory vesicle. It localises to the acrosome. In terms of biological role, binds 7-ketocholesterol. Acts during spermatid development where its function is required prior to the removal of cytoplasm from the sperm head. In Mus musculus (Mouse), this protein is Oxysterol-binding protein 2 (Osbp2).